Consider the following 231-residue polypeptide: Lytic polysaccharide monooxygenase-like protein X325 (231 aa).

A signal peptide spans 1–17 (MRLSLLVTLALTALIEA). His18 contributes to the Cu(2+) binding site. Asn34, Asn55, Asn98, Asn133, Asn174, and Asn180 each carry an N-linked (GlcNAc...) asparagine glycan. 2 disulfide bridges follow: Cys47–Cys157 and Cys122–Cys178. The GPI-anchor amidated isoleucine moiety is linked to residue Ile202. Residues 203 to 231 (ASTTTGSAPRYYSWAGWLPLVAGAIWMAL) constitute a propeptide, removed in mature form.

This sequence belongs to the X325 family. The cofactor is Cu(2+).

Its subcellular location is the cell membrane. Its function is as follows. Lytic polysaccharide monooxygenase-like protein that has diverged to biological functions other than polysaccharide degradation since it does not perform oxidative cleavage of polysaccharides. Acts as a cell surface-bound protein that functions in the copper-accumulation pathway. May also act as the major cell wall sensor that regulates MAP kinase-dependent hyphal anastomosis, the fusion of hyphal cells. In Hypocrea jecorina (strain QM6a) (Trichoderma reesei), this protein is Lytic polysaccharide monooxygenase-like protein X325.